Reading from the N-terminus, the 420-residue chain is UDP-N-acetylglucosamine 1-carboxyvinyltransferase 2 (420 aa).

Lys22–Asn23 serves as a coordination point for phosphoenolpyruvate. Position 92 (Arg92) interacts with UDP-N-acetyl-alpha-D-glucosamine. Cys116 (proton donor) is an active-site residue. 2-(S-cysteinyl)pyruvic acid O-phosphothioketal is present on Cys116. UDP-N-acetyl-alpha-D-glucosamine is bound by residues Arg121–Leu125, Asp307, and Ile329.

It belongs to the EPSP synthase family. MurA subfamily.

The protein resides in the cytoplasm. It catalyses the reaction phosphoenolpyruvate + UDP-N-acetyl-alpha-D-glucosamine = UDP-N-acetyl-3-O-(1-carboxyvinyl)-alpha-D-glucosamine + phosphate. The protein operates within cell wall biogenesis; peptidoglycan biosynthesis. In terms of biological role, cell wall formation. Adds enolpyruvyl to UDP-N-acetylglucosamine. The protein is UDP-N-acetylglucosamine 1-carboxyvinyltransferase 2 of Streptococcus thermophilus (strain ATCC BAA-250 / LMG 18311).